Here is a 1153-residue protein sequence, read N- to C-terminus: Cytosolic carboxypeptidase 1 (1153 aa).

Positions 357-400 are disordered; that stretch reads NQPPGVDDVVDESDENEATEVDTENDTENEEDDTGHKTQNDDIE. Residues 364 to 389 are compositionally biased toward acidic residues; the sequence is DVVDESDENEATEVDTENDTENEEDD. Residues 774–1063 enclose the Peptidase M14 domain; it reads YPYTYSMLKM…QFCLALLRLR (290 aa). His-845, Glu-848, and His-942 together coordinate Zn(2+). The active-site Proton donor/acceptor is the Glu-1027. Residues 1108-1128 are compositionally biased toward acidic residues; the sequence is AFLEEVDYSAESNDENDPELE. Positions 1108 to 1153 are disordered; it reads AFLEEVDYSAESNDENDPELEPDLRDNHALPDPSSDSELSHQDSLT. Residues 1141–1153 show a composition bias toward polar residues; it reads SSDSELSHQDSLT.

The protein belongs to the peptidase M14 family. It depends on Zn(2+) as a cofactor.

The protein localises to the cytoplasm. It is found in the cytosol. The protein resides in the nucleus. Its subcellular location is the mitochondrion. The catalysed reaction is (L-glutamyl)(n+1)-gamma-L-glutamyl-L-glutamyl-[protein] + H2O = (L-glutamyl)(n)-gamma-L-glutamyl-L-glutamyl-[protein] + L-glutamate. The enzyme catalyses C-terminal L-alpha-aminoacyl-L-glutamyl-L-glutamyl-[tubulin] + H2O = C-terminal L-alpha-aminoacyl-L-glutamyl-[tubulin] + L-glutamate. Its function is as follows. Metallocarboxypeptidase that mediates protein deglutamylation of tubulin and non-tubulin target proteins. Catalyzes the removal of polyglutamate side chains present on the gamma-carboxyl group of glutamate residues within the C-terminal tail of alpha- and beta-tubulin. Specifically cleaves tubulin long-side-chains, while it is not able to remove the branching point glutamate. Also catalyzes the removal of polyglutamate residues from the carboxy-terminus of alpha-tubulin as well as non-tubulin proteins. This is Cytosolic carboxypeptidase 1 (agtpbp1) from Danio rerio (Zebrafish).